The sequence spans 567 residues: Proline--tRNA ligase (567 aa).

It belongs to the class-II aminoacyl-tRNA synthetase family. ProS type 1 subfamily. Homodimer.

Its subcellular location is the cytoplasm. The enzyme catalyses tRNA(Pro) + L-proline + ATP = L-prolyl-tRNA(Pro) + AMP + diphosphate. Functionally, catalyzes the attachment of proline to tRNA(Pro) in a two-step reaction: proline is first activated by ATP to form Pro-AMP and then transferred to the acceptor end of tRNA(Pro). As ProRS can inadvertently accommodate and process non-cognate amino acids such as alanine and cysteine, to avoid such errors it has two additional distinct editing activities against alanine. One activity is designated as 'pretransfer' editing and involves the tRNA(Pro)-independent hydrolysis of activated Ala-AMP. The other activity is designated 'posttransfer' editing and involves deacylation of mischarged Ala-tRNA(Pro). The misacylated Cys-tRNA(Pro) is not edited by ProRS. In Staphylococcus aureus (strain USA300), this protein is Proline--tRNA ligase.